The chain runs to 885 residues: Leucine--tRNA ligase (885 aa).

A 'HIGH' region motif is present at residues 48–58 (PYPSGKLHMGH). The 'KMSKS' region motif lies at 639 to 643 (TMSKS). An ATP-binding site is contributed by K642.

Belongs to the class-I aminoacyl-tRNA synthetase family.

The protein localises to the cytoplasm. The enzyme catalyses tRNA(Leu) + L-leucine + ATP = L-leucyl-tRNA(Leu) + AMP + diphosphate. This chain is Leucine--tRNA ligase, found in Bordetella avium (strain 197N).